Here is a 93-residue protein sequence, read N- to C-terminus: Putative transmembrane protein ORF25 (93 aa).

The next 3 helical transmembrane spans lie at 1 to 21 (MAGI…NVNA), 22 to 42 (FLVL…YASI), and 60 to 80 (LWIF…VMSL).

It is found in the host membrane. This chain is Putative transmembrane protein ORF25, found in His1 virus (isolate Australia/Victoria) (His1V).